The primary structure comprises 337 residues: DNA-directed RNA polymerase subunit alpha (337 aa).

Positions 1–233 are alpha N-terminal domain (alpha-NTD); it reads MVREKVTVST…DLFIPFLHME (233 aa). An alpha C-terminal domain (alpha-CTD) region spans residues 265–337; the sequence is KKIALKSIFI…FVIDLAKNKF (73 aa).

It belongs to the RNA polymerase alpha chain family. As to quaternary structure, in plastids the minimal PEP RNA polymerase catalytic core is composed of four subunits: alpha, beta, beta', and beta''. When a (nuclear-encoded) sigma factor is associated with the core the holoenzyme is formed, which can initiate transcription.

The protein resides in the plastid. The protein localises to the chloroplast. It carries out the reaction RNA(n) + a ribonucleoside 5'-triphosphate = RNA(n+1) + diphosphate. Functionally, DNA-dependent RNA polymerase catalyzes the transcription of DNA into RNA using the four ribonucleoside triphosphates as substrates. In Solanum lycopersicum (Tomato), this protein is DNA-directed RNA polymerase subunit alpha.